Consider the following 320-residue polypeptide: Acyl-coenzyme A thioesterase 8 (320 aa).

Catalysis depends on charge relay system residues aspartate 233, serine 255, and glutamine 305. The Microbody targeting signal signature appears at 318 to 320 (SKL).

Belongs to the C/M/P thioester hydrolase family. As to quaternary structure, homodimer.

Its subcellular location is the peroxisome matrix. It catalyses the reaction choloyl-CoA + H2O = cholate + CoA + H(+). The enzyme catalyses chenodeoxycholoyl-CoA + H2O = chenodeoxycholate + CoA + H(+). It carries out the reaction acetyl-CoA + H2O = acetate + CoA + H(+). The catalysed reaction is butanoyl-CoA + H2O = butanoate + CoA + H(+). It catalyses the reaction hexanoyl-CoA + H2O = hexanoate + CoA + H(+). The enzyme catalyses octanoyl-CoA + H2O = octanoate + CoA + H(+). It carries out the reaction decanoyl-CoA + H2O = decanoate + CoA + H(+). The catalysed reaction is dodecanoyl-CoA + H2O = dodecanoate + CoA + H(+). It catalyses the reaction tetradecanoyl-CoA + H2O = tetradecanoate + CoA + H(+). The enzyme catalyses 4,8-dimethylnonanoyl-CoA + H2O = 4,8-dimethylnonanoate + CoA + H(+). It carries out the reaction 2,6-dimethylheptanoyl-CoA + H2O = 2,6-dimethylheptanoate + CoA + H(+). The catalysed reaction is malonyl-CoA + H2O = malonate + CoA + H(+). It catalyses the reaction acetoacetyl-CoA + H2O = acetoacetate + CoA + H(+). The enzyme catalyses propanoyl-CoA + H2O = propanoate + CoA + H(+). It carries out the reaction succinyl-CoA + H2O = succinate + CoA + H(+). The catalysed reaction is glutaryl-CoA + H2O = glutarate + CoA + H(+). It catalyses the reaction hexanedioyl-CoA + H2O = hexanedioate + CoA + H(+). The enzyme catalyses octanedioyl-CoA + H2O = octanedioate + CoA + H(+). It carries out the reaction decanedioyl-CoA + H2O = decanedioate + CoA + H(+). The catalysed reaction is dodecanedioyl-CoA + H2O = dodecanedioate + CoA + H(+). It catalyses the reaction (9Z)-tetradecenoyl-CoA + H2O = (9Z)-tetradecenoate + CoA + H(+). The enzyme catalyses hexadecanoyl-CoA + H2O = hexadecanoate + CoA + H(+). It carries out the reaction (9Z)-hexadecenoyl-CoA + H2O = (9Z)-hexadecenoate + CoA + H(+). The catalysed reaction is octadecanoyl-CoA + H2O = octadecanoate + CoA + H(+). It catalyses the reaction (9Z)-octadecenoyl-CoA + H2O = (9Z)-octadecenoate + CoA + H(+). The enzyme catalyses (9Z,12Z)-octadecadienoyl-CoA + H2O = (9Z,12Z)-octadecadienoate + CoA + H(+). It carries out the reaction eicosanoyl-CoA + H2O = eicosanoate + CoA + H(+). The catalysed reaction is (5Z,8Z,11Z,14Z)-eicosatetraenoyl-CoA + H2O = (5Z,8Z,11Z,14Z)-eicosatetraenoate + CoA + H(+). It catalyses the reaction (3S)-3-hydroxy-3-methylglutaryl-CoA + H2O = 3-hydroxy-3-methylglutarate + CoA + H(+). The enzyme catalyses 3alpha,7alpha,12alpha-trihydroxy-5beta-cholestan-26-oyl-CoA + H2O = 3alpha,7alpha,12alpha-trihydroxy-5beta-cholestan-26-oate + CoA + H(+). It carries out the reaction 2-methyloctadecanoyl-CoA + H2O = 2-methyloctadecanoate + CoA + H(+). The catalysed reaction is prostaglandin F2alpha-CoA + H2O = prostaglandin F2alpha + CoA + H(+). Its activity is regulated as follows. Inhibited by CoASH (IC(50)=10-15 uM). Also inhibited by cysteine-reactive agents. Functionally, catalyzes the hydrolysis of acyl-CoAs into free fatty acids and coenzyme A (CoASH), regulating their respective intracellular levels. Displays no strong substrate specificity with respect to the carboxylic acid moiety of Acyl-CoAs. Hydrolyzes medium length (C2 to C20) straight-chain, saturated and unsaturated acyl-CoAS but is inactive towards substrates with longer aliphatic chains. Moreover, it catalyzes the hydrolysis of CoA esters of bile acids, such as choloyl-CoA and chenodeoxycholoyl-CoA and competes with bile acid CoA:amino acid N-acyltransferase (BAAT). Is also able to hydrolyze CoA esters of dicarboxylic acids. It is involved in the metabolic regulation of peroxisome proliferation. This is Acyl-coenzyme A thioesterase 8 (Acot8) from Rattus norvegicus (Rat).